Reading from the N-terminus, the 133-residue chain is 14 kDa fatty acid-binding protein (133 aa).

(5Z,8Z,11Z,14Z)-eicosatetraenoate-binding positions include R107 and 127–129; that span reads RNY. (9Z)-octadecenoate-binding positions include R107 and 127-129; that span reads RNY.

Belongs to the calycin superfamily. Fatty-acid binding protein (FABP) family. In terms of tissue distribution, tubercles, muscle layers and body.

Its subcellular location is the cytoplasm. In terms of biological role, may play a role in the transport of fatty acids. Binds various fatty acids, such as arachidonic, oleic, palmitic and linolenic acid (in vitro). The polypeptide is 14 kDa fatty acid-binding protein (Schistosoma mansoni (Blood fluke)).